Consider the following 160-residue polypeptide: Major strawberry allergen Fra a 1.07 (160 aa).

This sequence belongs to the BetVI family. In terms of processing, phosphorylated in vivo. Phosphorylation prevents its activity as ribonuclease. As to expression, highly expressed in roots. Expressed a low levels in ripe red fruits.

In terms of biological role, possesses ribonuclease activity in vitro. The protein is Major strawberry allergen Fra a 1.07 of Fragaria ananassa (Strawberry).